Here is a 189-residue protein sequence, read N- to C-terminus: Transcription factor FapR (189 aa).

Belongs to the FapR family.

Functionally, transcriptional factor involved in regulation of membrane lipid biosynthesis by repressing genes involved in fatty acid and phospholipid metabolism. The polypeptide is Transcription factor FapR (Listeria innocua serovar 6a (strain ATCC BAA-680 / CLIP 11262)).